The chain runs to 402 residues: E3 ubiquitin-protein ligase makorin-2 (402 aa).

3 C3H1-type zinc fingers span residues 2-29 (TTKQVTCRYFLHGVCREGNHCQFSHDPS), 31-58 (SKPSTICKFYQRGTCAYGERCRYDHVKL), and 141-168 (QDLPRLCPYAAVGHCYYEENCIYLHGDK). Residues 169–198 (CEVCGLQVLDPHNPEQRSMHEKMCLLAFEA) form a makorin-type Cys-His region. The RING-type zinc finger occupies 214–268 (CSICMEVVVQKMNPSDRRFGILSSCCHVFCLACIRKWRCTRNFSNKIIKSCPECR). The segment at 297–326 (GVGKKPCKYFDQGRGSCPFGGKCLYLHALP) adopts a C3H1-type 4 zinc-finger fold.

It localises to the cytoplasm. The protein localises to the nucleus. The catalysed reaction is S-ubiquitinyl-[E2 ubiquitin-conjugating enzyme]-L-cysteine + [acceptor protein]-L-lysine = [E2 ubiquitin-conjugating enzyme]-L-cysteine + N(6)-ubiquitinyl-[acceptor protein]-L-lysine.. Its pathway is protein modification; protein ubiquitination. In terms of biological role, E3 ubiquitin ligase catalyzing the covalent attachment of ubiquitin moieties onto substrate proteins. Inhibits neurogenesis and axis formation during embryonic development by modulating the phosphatidylinositol 3-kinase (PI3K) pathway. Acts downstream of PI3K and akt1 to up-regulate gsk3b mRNA expression. The protein is E3 ubiquitin-protein ligase makorin-2 of Takifugu rubripes (Japanese pufferfish).